The chain runs to 1281 residues: Angiotensin-converting enzyme (1281 aa).

The signal sequence occupies residues 1 to 17 (MPAALGLLLPWLSLVGA). The Extracellular segment spans residues 18 to 1241 (LQPGLEPPQS…MSVGTKQATA (1224 aa)). 2 consecutive Peptidase M2 domains span residues 28–610 (DPTE…LGWP) and 629–1208 (IVDE…LGWP). N-linked (GlcNAc...) asparagine glycosylation is found at N42, N62, N80, N99, and N148. C145 and C151 are joined by a disulfide. Y217 is a binding site for chloride. N304 carries N-linked (GlcNAc...) asparagine glycosylation. A disulfide bridge links C345 with C363. Residue H376 coordinates Zn(2+). E377 functions as the Proton acceptor 1 in the catalytic mechanism. Residues H380 and E404 each coordinate Zn(2+). The N-linked (GlcNAc...) asparagine glycan is linked to N495. The active-site Proton donor 1 is H506. R515 contacts chloride. A disulfide bond links C531 and C543. N-linked (GlcNAc...) asparagine glycans are attached at residues N535, N573, N601, N643, N663, and N746. A disulfide bridge links C743 with C749. Chloride contacts are provided by R777 and Y815. The cysteines at positions 943 and 961 are disulfide-linked. A Zn(2+)-binding site is contributed by H974. Catalysis depends on E975, which acts as the Proton acceptor 2. Residues H978 and E1002 each contribute to the Zn(2+) site. Residues W1076 and R1080 each contribute to the chloride site. H1104 functions as the Proton donor 2 in the catalytic mechanism. R1113 contacts chloride. A disulfide bond links C1129 and C1141. N1177 carries N-linked (GlcNAc...) asparagine glycosylation. The tract at residues 1201-1240 (NGEVLGWPEYSWTPYAVTEFHAATDTADFLGMSVGTKQAT) is juxtamembrane stalk. Residues 1242–1262 (GAWVLLALALVFLITSIFLGV) traverse the membrane as a helical segment. Residues 1263–1281 (KLFSSRRKAFKSSSEMELK) are Cytoplasmic-facing.

The protein belongs to the peptidase M2 family. Zn(2+) serves as cofactor. Requires chloride as cofactor.

Its subcellular location is the cell membrane. It localises to the cytoplasm. The enzyme catalyses Release of a C-terminal dipeptide, oligopeptide-|-Xaa-Yaa, when Xaa is not Pro, and Yaa is neither Asp nor Glu. Thus, conversion of angiotensin I to angiotensin II, with increase in vasoconstrictor activity, but no action on angiotensin II.. It catalyses the reaction angiotensin I + H2O = L-histidyl-L-leucine + angiotensin II. It carries out the reaction bradykinin + H2O = L-Phe-L-Arg + bradykinin(1-7). The catalysed reaction is substance P + H2O = substance P(1-9) + L-Leu-L-Met-NH2. The enzyme catalyses substance P + H2O = substance P(1-8) + Gly-L-Leu-L-Met-NH2. It catalyses the reaction substance P + H2O = L-Phe-L-Phe-Gly-L-Leu-L-Met-NH2 + substance P(1-6). It carries out the reaction neurotensin + H2O = neurotensin(1-11) + L-isoleucyl-L-leucine. The catalysed reaction is goralatide + H2O = N-acetyl-L-seryl-L-aspartate + L-lysyl-L-proline. The enzyme catalyses Met-enkephalin + H2O = L-phenylalanyl-L-methionine + L-tyrosylglycylglycine. It catalyses the reaction Leu-enkephalin + H2O = L-tyrosylglycylglycine + L-phenylalanyl-L-leucine. It carries out the reaction Met-enkephalin-Arg-Phe + H2O = L-arginyl-L-phenylalanine + Met-enkephalin. Functionally, dipeptidyl carboxypeptidase that removes dipeptides from the C-terminus of a variety of circulating hormones, such as angiotensin I, bradykinin or enkephalins, thereby playing a key role in the regulation of blood pressure, electrolyte homeostasis or synaptic plasticity. Composed of two similar catalytic domains, each possessing a functional active site, with different selectivity for substrates. Plays a major role in the angiotensin-renin system that regulates blood pressure and sodium retention by the kidney by converting angiotensin I to angiotensin II, resulting in an increase of the vasoconstrictor activity of angiotensin. Also able to inactivate bradykinin, a potent vasodilator, and therefore enhance the blood pressure response. Acts as a regulator of synaptic transmission by mediating cleavage of neuropeptide hormones, such as substance P, neurotensin or enkephalins. Catalyzes degradation of different enkephalin neuropeptides (Met-enkephalin, Leu-enkephalin, Met-enkephalin-Arg-Phe and possibly Met-enkephalin-Arg-Gly-Leu). Also acts as a regulator of hematopoietic stem cell differentiation by mediating degradation of hemoregulatory peptide N-acetyl-SDKP (AcSDKP). This chain is Angiotensin-converting enzyme, found in Gallus gallus (Chicken).